Reading from the N-terminus, the 69-residue chain is Fumarase D (69 aa).

Belongs to the FumD family.

The enzyme catalyses (S)-malate = fumarate + H2O. In terms of biological role, in vitro catalyzes the addition of water to fumarate, forming malate. Cannot catalyze the reverse reaction. Cannot use the cis-isomer maleate as substrate. In Shigella flexneri, this protein is Fumarase D.